The sequence spans 76 residues: Acyl carrier protein (76 aa).

One can recognise a Carrier domain in the interval 1–76 (MSVEEKVKKI…DAIDYIAGKQ (76 aa)). O-(pantetheine 4'-phosphoryl)serine is present on Ser36.

It belongs to the acyl carrier protein (ACP) family. 4'-phosphopantetheine is transferred from CoA to a specific serine of apo-ACP by AcpS. This modification is essential for activity because fatty acids are bound in thioester linkage to the sulfhydryl of the prosthetic group.

Its subcellular location is the cytoplasm. Its pathway is lipid metabolism; fatty acid biosynthesis. Its function is as follows. Carrier of the growing fatty acid chain in fatty acid biosynthesis. The protein is Acyl carrier protein of Oleidesulfovibrio alaskensis (strain ATCC BAA-1058 / DSM 17464 / G20) (Desulfovibrio alaskensis).